The chain runs to 52 residues: Small ribosomal subunit protein uS14 (52 aa).

Zn(2+)-binding residues include Cys17, Cys20, Cys35, and Cys38.

Belongs to the universal ribosomal protein uS14 family. Zinc-binding uS14 subfamily. Part of the 30S ribosomal subunit. Zn(2+) serves as cofactor.

Its function is as follows. Binds 16S rRNA, required for the assembly of 30S particles. In Halobacterium salinarum (strain ATCC 700922 / JCM 11081 / NRC-1) (Halobacterium halobium), this protein is Small ribosomal subunit protein uS14.